A 96-amino-acid chain; its full sequence is Co-chaperonin GroES (96 aa).

This sequence belongs to the GroES chaperonin family. As to quaternary structure, heptamer of 7 subunits arranged in a ring. Interacts with the chaperonin GroEL.

The protein resides in the cytoplasm. Functionally, together with the chaperonin GroEL, plays an essential role in assisting protein folding. The GroEL-GroES system forms a nano-cage that allows encapsulation of the non-native substrate proteins and provides a physical environment optimized to promote and accelerate protein folding. GroES binds to the apical surface of the GroEL ring, thereby capping the opening of the GroEL channel. This Citrifermentans bemidjiense (strain ATCC BAA-1014 / DSM 16622 / JCM 12645 / Bem) (Geobacter bemidjiensis) protein is Co-chaperonin GroES.